Consider the following 305-residue polypeptide: HPr kinase/phosphorylase (305 aa).

Residues His136 and Lys157 contribute to the active site. An ATP-binding site is contributed by 151–158 (GESGIGKS). Ser158 is a Mg(2+) binding site. Asp175 serves as the catalytic Proton acceptor; for phosphorylation activity. Proton donor; for dephosphorylation activity. The tract at residues 198–207 (LEVRGLGIID) is important for the catalytic mechanism of both phosphorylation and dephosphorylation. Glu199 contributes to the Mg(2+) binding site. The active site involves Arg240. The interval 261-266 (PIRPGR) is important for the catalytic mechanism of dephosphorylation.

Belongs to the HPrK/P family. Homohexamer. Requires Mg(2+) as cofactor.

The catalysed reaction is [HPr protein]-L-serine + ATP = [HPr protein]-O-phospho-L-serine + ADP + H(+). It carries out the reaction [HPr protein]-O-phospho-L-serine + phosphate + H(+) = [HPr protein]-L-serine + diphosphate. Catalyzes the ATP- as well as the pyrophosphate-dependent phosphorylation of a specific serine residue in HPr, a phosphocarrier protein of the phosphoenolpyruvate-dependent sugar phosphotransferase system (PTS). HprK/P also catalyzes the pyrophosphate-producing, inorganic phosphate-dependent dephosphorylation (phosphorolysis) of seryl-phosphorylated HPr (P-Ser-HPr). The two antagonistic activities of HprK/P are regulated by several intracellular metabolites, which change their concentration in response to the absence or presence of rapidly metabolisable carbon sources (glucose, fructose, etc.) in the growth medium. Therefore, by controlling the phosphorylation state of HPr, HPrK/P is a sensor enzyme that plays a major role in the regulation of carbon metabolism and sugar transport: it mediates carbon catabolite repression (CCR), and regulates PTS-catalyzed carbohydrate uptake and inducer exclusion. The sequence is that of HPr kinase/phosphorylase from Clostridium tetani (strain Massachusetts / E88).